Reading from the N-terminus, the 960-residue chain is Glycine dehydrogenase (decarboxylating) (960 aa).

Lys709 is modified (N6-(pyridoxal phosphate)lysine).

The protein belongs to the GcvP family. As to quaternary structure, the glycine cleavage system is composed of four proteins: P, T, L and H. The cofactor is pyridoxal 5'-phosphate.

It carries out the reaction N(6)-[(R)-lipoyl]-L-lysyl-[glycine-cleavage complex H protein] + glycine + H(+) = N(6)-[(R)-S(8)-aminomethyldihydrolipoyl]-L-lysyl-[glycine-cleavage complex H protein] + CO2. Its function is as follows. The glycine cleavage system catalyzes the degradation of glycine. The P protein binds the alpha-amino group of glycine through its pyridoxal phosphate cofactor; CO(2) is released and the remaining methylamine moiety is then transferred to the lipoamide cofactor of the H protein. This is Glycine dehydrogenase (decarboxylating) from Edwardsiella ictaluri (strain 93-146).